Consider the following 283-residue polypeptide: Elongation factor Ts (283 aa).

Residues 80–83 form an involved in Mg(2+) ion dislocation from EF-Tu region; that stretch reads TDFV.

The protein belongs to the EF-Ts family.

The protein localises to the cytoplasm. Its function is as follows. Associates with the EF-Tu.GDP complex and induces the exchange of GDP to GTP. It remains bound to the aminoacyl-tRNA.EF-Tu.GTP complex up to the GTP hydrolysis stage on the ribosome. This chain is Elongation factor Ts, found in Salmonella choleraesuis (strain SC-B67).